The following is a 519-amino-acid chain: Probable carboxypeptidase S-like 2 (519 aa).

The helical transmembrane segment at 25–45 (FNLIKIIIRNLLIGILLMLVL) threads the bilayer. His-151 serves as a coordination point for Zn(2+). Asp-153 is an active-site residue. Position 184 (Asp-184) interacts with Zn(2+). The active-site Proton acceptor is the Glu-218. Positions 219, 246, and 490 each coordinate Zn(2+).

This sequence belongs to the peptidase M20A family. It depends on Zn(2+) as a cofactor.

The protein resides in the membrane. The sequence is that of Probable carboxypeptidase S-like 2 from Dictyostelium discoideum (Social amoeba).